The primary structure comprises 276 residues: Undecaprenyl-diphosphatase (276 aa).

The next 7 helical transmembrane spans lie at 1–21 (MSWL…FLPV), 39–59 (AGAS…LVYF), 84–104 (YWLG…GLLF), 115–135 (LWLV…AEYY), 188–208 (FGFL…LPDA), 222–242 (QLFV…AWFL), and 253–273 (FVGY…AGVV).

It belongs to the UppP family.

It localises to the cell membrane. The enzyme catalyses di-trans,octa-cis-undecaprenyl diphosphate + H2O = di-trans,octa-cis-undecaprenyl phosphate + phosphate + H(+). In terms of biological role, catalyzes the dephosphorylation of undecaprenyl diphosphate (UPP). Confers resistance to bacitracin. The sequence is that of Undecaprenyl-diphosphatase from Mycolicibacterium vanbaalenii (strain DSM 7251 / JCM 13017 / BCRC 16820 / KCTC 9966 / NRRL B-24157 / PYR-1) (Mycobacterium vanbaalenii).